Here is a 1024-residue protein sequence, read N- to C-terminus: Multidrug resistance protein MdtC (1024 aa).

12 helical membrane passes run 12 to 32 (VATT…FSLL), 333 to 353 (EVER…FLFL), 360 to 380 (LIPA…MYLC), 387 to 407 (LSLM…IVVL), 431 to 451 (VGFT…PLLL), 463 to 483 (FAVT…TLTP), 528 to 548 (WVMV…ISIP), 853 to 873 (LWLI…LYES), 875 to 895 (VHPL…LLAL), 897 to 917 (LFDA…IGIV), 953 to 973 (PILM…ISSG), and 984 to 1004 (ITIV…TPVV).

Belongs to the resistance-nodulation-cell division (RND) (TC 2.A.6) family. MdtC subfamily. In terms of assembly, part of a tripartite efflux system composed of MdtA, MdtB and MdtC. MdtC forms a heteromultimer with MdtB.

The protein localises to the cell inner membrane. The protein is Multidrug resistance protein MdtC of Yersinia enterocolitica serotype O:8 / biotype 1B (strain NCTC 13174 / 8081).